Consider the following 254-residue polypeptide: Probable transcriptional regulatory protein HDEF_0869 (254 aa).

The segment at 1–20 (MAGHSKWANTKHRKAAQDAK) is disordered.

The protein belongs to the TACO1 family.

The protein resides in the cytoplasm. The sequence is that of Probable transcriptional regulatory protein HDEF_0869 from Hamiltonella defensa subsp. Acyrthosiphon pisum (strain 5AT).